The following is a 367-amino-acid chain: 2-aminoethylphosphonate--pyruvate transaminase (367 aa).

N6-(pyridoxal phosphate)lysine is present on Lys193.

The protein belongs to the class-V pyridoxal-phosphate-dependent aminotransferase family. PhnW subfamily. As to quaternary structure, homodimer. Pyridoxal 5'-phosphate is required as a cofactor.

The catalysed reaction is (2-aminoethyl)phosphonate + pyruvate = phosphonoacetaldehyde + L-alanine. Functionally, involved in phosphonate degradation. The protein is 2-aminoethylphosphonate--pyruvate transaminase of Vibrio parahaemolyticus serotype O3:K6 (strain RIMD 2210633).